The sequence spans 572 residues: Proline--tRNA ligase (572 aa).

The protein belongs to the class-II aminoacyl-tRNA synthetase family. ProS type 1 subfamily. In terms of assembly, homodimer.

It is found in the cytoplasm. The catalysed reaction is tRNA(Pro) + L-proline + ATP = L-prolyl-tRNA(Pro) + AMP + diphosphate. In terms of biological role, catalyzes the attachment of proline to tRNA(Pro) in a two-step reaction: proline is first activated by ATP to form Pro-AMP and then transferred to the acceptor end of tRNA(Pro). As ProRS can inadvertently accommodate and process non-cognate amino acids such as alanine and cysteine, to avoid such errors it has two additional distinct editing activities against alanine. One activity is designated as 'pretransfer' editing and involves the tRNA(Pro)-independent hydrolysis of activated Ala-AMP. The other activity is designated 'posttransfer' editing and involves deacylation of mischarged Ala-tRNA(Pro). The misacylated Cys-tRNA(Pro) is not edited by ProRS. The sequence is that of Proline--tRNA ligase from Hydrogenovibrio crunogenus (strain DSM 25203 / XCL-2) (Thiomicrospira crunogena).